We begin with the raw amino-acid sequence, 528 residues long: Na(+)/H(+) antiporter NhaB (528 aa).

10 helical membrane passes run 28 to 50, 67 to 87, 98 to 118, 140 to 160, 240 to 260, 305 to 325, 350 to 370, 391 to 411, 449 to 469, and 476 to 496; these read FLVI…VLVV, PGGL…SQVL, LLLV…LFVF, AFLS…AVAV, FFLR…FTCF, ALIG…VGLI, EEAL…GVII, LVIF…VFVG, ATPN…APLI, and MVWM…MAIE.

Belongs to the NhaB Na(+)/H(+) (TC 2.A.34) antiporter family.

It localises to the cell inner membrane. It catalyses the reaction 2 Na(+)(in) + 3 H(+)(out) = 2 Na(+)(out) + 3 H(+)(in). Na(+)/H(+) antiporter that extrudes sodium in exchange for external protons. In Shewanella frigidimarina (strain NCIMB 400), this protein is Na(+)/H(+) antiporter NhaB.